The sequence spans 384 residues: S-adenosylmethionine synthase (384 aa).

Histidine 16 contributes to the ATP binding site. Aspartate 18 serves as a coordination point for Mg(2+). A K(+)-binding site is contributed by glutamate 44. L-methionine-binding residues include glutamate 57 and glutamine 100. The flexible loop stretch occupies residues 100–110 (QSADIAMGVDE). ATP contacts are provided by residues 165 to 167 (DAK), aspartate 240, 246 to 247 (RK), alanine 263, and lysine 267. L-methionine is bound at residue aspartate 240. Lysine 271 contributes to the L-methionine binding site.

The protein belongs to the AdoMet synthase family. In terms of assembly, homotetramer; dimer of dimers. Requires Mg(2+) as cofactor. It depends on K(+) as a cofactor.

It localises to the cytoplasm. It catalyses the reaction L-methionine + ATP + H2O = S-adenosyl-L-methionine + phosphate + diphosphate. It functions in the pathway amino-acid biosynthesis; S-adenosyl-L-methionine biosynthesis; S-adenosyl-L-methionine from L-methionine: step 1/1. Catalyzes the formation of S-adenosylmethionine (AdoMet) from methionine and ATP. The overall synthetic reaction is composed of two sequential steps, AdoMet formation and the subsequent tripolyphosphate hydrolysis which occurs prior to release of AdoMet from the enzyme. This Cellvibrio japonicus (strain Ueda107) (Pseudomonas fluorescens subsp. cellulosa) protein is S-adenosylmethionine synthase.